Consider the following 516-residue polypeptide: Putative thymidine phosphorylase (516 aa).

It belongs to the thymidine/pyrimidine-nucleoside phosphorylase family. Type 2 subfamily.

The catalysed reaction is thymidine + phosphate = 2-deoxy-alpha-D-ribose 1-phosphate + thymine. The sequence is that of Putative thymidine phosphorylase from Methylococcus capsulatus (strain ATCC 33009 / NCIMB 11132 / Bath).